Here is a 176-residue protein sequence, read N- to C-terminus: RNA pyrophosphohydrolase (176 aa).

Positions 6–149 constitute a Nudix hydrolase domain; it reads GYRPNVGIVI…KRDVYRRVMK (144 aa). A Nudix box motif is present at residues 38-59; sequence GGINPGESAEQAMYRELFEEVG.

The protein belongs to the Nudix hydrolase family. RppH subfamily. It depends on a divalent metal cation as a cofactor.

In terms of biological role, accelerates the degradation of transcripts by removing pyrophosphate from the 5'-end of triphosphorylated RNA, leading to a more labile monophosphorylated state that can stimulate subsequent ribonuclease cleavage. This chain is RNA pyrophosphohydrolase, found in Shigella boydii serotype 18 (strain CDC 3083-94 / BS512).